Here is a 103-residue protein sequence, read N- to C-terminus: Small ribosomal subunit protein uS10 (103 aa).

The protein belongs to the universal ribosomal protein uS10 family. As to quaternary structure, part of the 30S ribosomal subunit.

In terms of biological role, involved in the binding of tRNA to the ribosomes. This is Small ribosomal subunit protein uS10 from Bordetella avium (strain 197N).